We begin with the raw amino-acid sequence, 660 residues long: Replication protein E1 (660 aa).

The disordered stretch occupies residues 1–60 (MADNSGTEGEEEDCSEAERAGGWFMVEAIVDRRTGDTISSDEDEEDEGEDMVDFIDDRPI). The span at 39–54 (SSDEDEEDEGEDMVDF) shows a compositional bias: acidic residues. The Nuclear localization signal signature appears at 87 to 89 (KRK). A phosphoserine; by host mark is found at Ser93, Ser97, Ser109, and Ser122. The Nuclear export signal motif lies at 108-117 (LSPRLDAIKL). A disordered region spans residues 128–196 (LFQLPDSGYG…DGEESQPLST (69 aa)). Residues 136 to 163 (YGQTQVDTDTGPSQVQDGCETGDQNGRQ) are compositionally biased toward polar residues. Residues 169–186 (SGTKDGENGSQEEERAGG) are compositionally biased toward basic and acidic residues. The tract at residues 197–363 (ETEKGACGVL…QTMVGHALQE (167 aa)) is DNA-binding region. Residues 462-612 (VEFIPFLCAF…CPLTSKGEPV (151 aa)) form the SF3 helicase domain. 488 to 495 (GPADTGKS) is a binding site for ATP. Lys569 is covalently cross-linked (Glycyl lysine isopeptide (Lys-Gly) (interchain with G-Cter in SUMO)). Over residues 635–644 (DPDDEEENGE) the composition is skewed to acidic residues. The segment at 635–660 (DPDDEEENGEPSEPFRCVPGQNTRTV) is disordered.

It belongs to the papillomaviridae E1 protein family. As to quaternary structure, can form hexamers. Interacts with E2 protein; this interaction increases E1 DNA binding specificity. Interacts with host DNA polymerase subunit POLA2. Interacts with host single stranded DNA-binding protein RPA1. Interacts with host TOP1; this interaction stimulates the enzymatic activity of TOP1. Post-translationally, phosphorylated. Sumoylated.

The protein resides in the host nucleus. It carries out the reaction Couples ATP hydrolysis with the unwinding of duplex DNA by translocating in the 3'-5' direction.. It catalyses the reaction ATP + H2O = ADP + phosphate + H(+). Functionally, ATP-dependent DNA 3'-5' helicase required for initiation of viral DNA replication. It forms a complex with the viral E2 protein. The E1-E2 complex binds to the replication origin which contains binding sites for both proteins. During the initial step, a dimer of E1 interacts with a dimer of protein E2 leading to a complex that binds the viral origin of replication with high specificity. Then, a second dimer of E1 displaces the E2 dimer in an ATP-dependent manner to form the E1 tetramer. Following this, two E1 monomers are added to each half of the site, which results in the formation of two E1 trimers on the viral ori. Subsequently, two hexamers will be created. The double hexamer acts as a bi-directional helicase machinery and unwinds the viral DNA and then recruits the host DNA polymerase to start replication. The sequence is that of Replication protein E1 from Human papillomavirus 29.